Consider the following 99-residue polypeptide: Large ribosomal subunit protein bL21 (99 aa).

It belongs to the bacterial ribosomal protein bL21 family. In terms of assembly, part of the 50S ribosomal subunit. Contacts protein L20.

Its function is as follows. This protein binds to 23S rRNA in the presence of protein L20. This chain is Large ribosomal subunit protein bL21, found in Mycoplasma mobile (strain ATCC 43663 / 163K / NCTC 11711) (Mesomycoplasma mobile).